The sequence spans 213 residues: MTDKSHQCVIIGIAGASASGKSLIASTLYRELREQVGDEHIGVIPEDSYYKDQSHLSMEERVKTNYDHPNAMDHNLLFQHLQMLKAGKPIELPVYSYVEHTRTAQTVHIEPKKVIILEGILLLTDARLREEMNFSIFVDTPLDICLMRRIKRDVNERGRSMDSVMTQYQKTVRPMFLQFIDPSKQYADIIVPRGGKNRIAIDILKAKISQFFE.

Residue 15–22 participates in ATP binding; it reads GASASGKS.

This sequence belongs to the uridine kinase family.

It localises to the cytoplasm. It catalyses the reaction uridine + ATP = UMP + ADP + H(+). The catalysed reaction is cytidine + ATP = CMP + ADP + H(+). Its pathway is pyrimidine metabolism; CTP biosynthesis via salvage pathway; CTP from cytidine: step 1/3. It functions in the pathway pyrimidine metabolism; UMP biosynthesis via salvage pathway; UMP from uridine: step 1/1. The sequence is that of Uridine kinase from Cronobacter sakazakii (strain ATCC BAA-894) (Enterobacter sakazakii).